Consider the following 368-residue polypeptide: Histidinol-phosphate aminotransferase (368 aa).

Residue K228 is modified to N6-(pyridoxal phosphate)lysine.

It belongs to the class-II pyridoxal-phosphate-dependent aminotransferase family. Histidinol-phosphate aminotransferase subfamily. The cofactor is pyridoxal 5'-phosphate.

The catalysed reaction is L-histidinol phosphate + 2-oxoglutarate = 3-(imidazol-4-yl)-2-oxopropyl phosphate + L-glutamate. It participates in amino-acid biosynthesis; L-histidine biosynthesis; L-histidine from 5-phospho-alpha-D-ribose 1-diphosphate: step 7/9. In Methanosarcina mazei (strain ATCC BAA-159 / DSM 3647 / Goe1 / Go1 / JCM 11833 / OCM 88) (Methanosarcina frisia), this protein is Histidinol-phosphate aminotransferase.